The primary structure comprises 425 residues: Dihydroorotase (425 aa).

Positions 61 and 63 each coordinate Zn(2+). Residues 63–65 (HLR) and Asn95 contribute to the substrate site. The Zn(2+) site is built by Asp153, His180, and His233. Asn279 provides a ligand contact to substrate. Asp306 serves as a coordination point for Zn(2+). Residue Asp306 is part of the active site. His310 lines the substrate pocket.

This sequence belongs to the metallo-dependent hydrolases superfamily. DHOase family. Class I DHOase subfamily. The cofactor is Zn(2+).

The catalysed reaction is (S)-dihydroorotate + H2O = N-carbamoyl-L-aspartate + H(+). It participates in pyrimidine metabolism; UMP biosynthesis via de novo pathway; (S)-dihydroorotate from bicarbonate: step 3/3. Its function is as follows. Catalyzes the reversible cyclization of carbamoyl aspartate to dihydroorotate. The protein is Dihydroorotase of Trichlorobacter lovleyi (strain ATCC BAA-1151 / DSM 17278 / SZ) (Geobacter lovleyi).